The sequence spans 337 residues: Casein kinase I isoform alpha (337 aa).

Residues Tyr20 to Phe288 form the Protein kinase domain. ATP-binding positions include Ile26–Ile34 and Lys49. Catalysis depends on Asp139, which acts as the Proton acceptor.

It belongs to the protein kinase superfamily. CK1 Ser/Thr protein kinase family. Casein kinase I subfamily. Interacts with cos. Mg(2+) serves as cofactor. Phosphorylated. The dephosphorylated kinase is active in the cytoplasm while the active kinase in the nucleus is phosphorylated.

The protein resides in the cytoplasm. It localises to the nucleus. The catalysed reaction is L-seryl-[protein] + ATP = O-phospho-L-seryl-[protein] + ADP + H(+). It carries out the reaction L-threonyl-[protein] + ATP = O-phospho-L-threonyl-[protein] + ADP + H(+). With respect to regulation, activity increases following DNA damage. Functionally, casein kinases are operationally defined by their preferential utilization of acidic proteins such as caseins as substrates. Can phosphorylate a large number of proteins. Negative regulator of wg signaling. Phosphorylates arm directly or indirectly and stimulates its degradation which prevents inappropriate wg signaling. Phosphorylates smo which promotes its accumulation at the cell surface and its signaling activity in response to hh. Together with dco, regulates proteolytic processing of ci by phosphorylating it, which promotes its binding to slmb, the F-box recognition component of the SCF(slmb) E3 ubiquitin-protein ligase required for ci processing. Inhibits condensin II interphase activity by promoting degradation of the Cap-H2 regulatory subunit and limiting the levels of chromatin-bound Cap-H2 which regulates interphase chromosome organization. The chain is Casein kinase I isoform alpha (CkIalpha) from Drosophila melanogaster (Fruit fly).